The following is a 227-amino-acid chain: Cytochrome c oxidase subunit 2 (227 aa).

Residues 1-26 (MATWSNLNLQNSSSPLMEQLIFFHDH) lie on the Mitochondrial intermembrane side of the membrane. Residues 27–48 (TLMILLMITVLVAYIMSMLFFN) traverse the membrane as a helical segment. Residues 49-62 (LYTNRFLLEGQTIE) are Mitochondrial matrix-facing. The chain crosses the membrane as a helical span at residues 63–82 (IIWTILPAITLIFIALPSLR). The Mitochondrial intermembrane segment spans residues 83-227 (LLYLLDESMD…FINWIKNYSS (145 aa)). H160, C195, E197, C199, H203, and M206 together coordinate Cu cation. Position 197 (E197) interacts with Mg(2+).

It belongs to the cytochrome c oxidase subunit 2 family. In terms of assembly, component of the cytochrome c oxidase (complex IV, CIV), a multisubunit enzyme composed of a catalytic core of 3 subunits and several supernumerary subunits. The complex exists as a monomer or a dimer and forms supercomplexes (SCs) in the inner mitochondrial membrane with ubiquinol-cytochrome c oxidoreductase (cytochrome b-c1 complex, complex III, CIII). It depends on Cu cation as a cofactor.

The protein resides in the mitochondrion inner membrane. The enzyme catalyses 4 Fe(II)-[cytochrome c] + O2 + 8 H(+)(in) = 4 Fe(III)-[cytochrome c] + 2 H2O + 4 H(+)(out). Component of the cytochrome c oxidase, the last enzyme in the mitochondrial electron transport chain which drives oxidative phosphorylation. The respiratory chain contains 3 multisubunit complexes succinate dehydrogenase (complex II, CII), ubiquinol-cytochrome c oxidoreductase (cytochrome b-c1 complex, complex III, CIII) and cytochrome c oxidase (complex IV, CIV), that cooperate to transfer electrons derived from NADH and succinate to molecular oxygen, creating an electrochemical gradient over the inner membrane that drives transmembrane transport and the ATP synthase. Cytochrome c oxidase is the component of the respiratory chain that catalyzes the reduction of oxygen to water. Electrons originating from reduced cytochrome c in the intermembrane space (IMS) are transferred via the dinuclear copper A center (CU(A)) of subunit 2 and heme A of subunit 1 to the active site in subunit 1, a binuclear center (BNC) formed by heme A3 and copper B (CU(B)). The BNC reduces molecular oxygen to 2 water molecules using 4 electrons from cytochrome c in the IMS and 4 protons from the mitochondrial matrix. This chain is Cytochrome c oxidase subunit 2 (COII), found in Acheta domesticus (House cricket).